The sequence spans 245 residues: Biosynthetic peptidoglycan transglycosylase (245 aa).

The helical transmembrane segment at 20–42 (VYAGSVFAGAWLATQLFYLVQIA) threads the bilayer.

The protein belongs to the glycosyltransferase 51 family.

It is found in the cell inner membrane. It carries out the reaction [GlcNAc-(1-&gt;4)-Mur2Ac(oyl-L-Ala-gamma-D-Glu-L-Lys-D-Ala-D-Ala)](n)-di-trans,octa-cis-undecaprenyl diphosphate + beta-D-GlcNAc-(1-&gt;4)-Mur2Ac(oyl-L-Ala-gamma-D-Glu-L-Lys-D-Ala-D-Ala)-di-trans,octa-cis-undecaprenyl diphosphate = [GlcNAc-(1-&gt;4)-Mur2Ac(oyl-L-Ala-gamma-D-Glu-L-Lys-D-Ala-D-Ala)](n+1)-di-trans,octa-cis-undecaprenyl diphosphate + di-trans,octa-cis-undecaprenyl diphosphate + H(+). Its pathway is cell wall biogenesis; peptidoglycan biosynthesis. In terms of biological role, peptidoglycan polymerase that catalyzes glycan chain elongation from lipid-linked precursors. The polypeptide is Biosynthetic peptidoglycan transglycosylase (Burkholderia ambifaria (strain MC40-6)).